Reading from the N-terminus, the 154-residue chain is Large ribosomal subunit protein uL13 (154 aa).

The tract at residues 132–154 (PHEAQQPEVLDVKSMNAKNTRSA) is disordered.

It belongs to the universal ribosomal protein uL13 family. Part of the 50S ribosomal subunit.

Functionally, this protein is one of the early assembly proteins of the 50S ribosomal subunit, although it is not seen to bind rRNA by itself. It is important during the early stages of 50S assembly. The polypeptide is Large ribosomal subunit protein uL13 (Paracoccus denitrificans (strain Pd 1222)).